Reading from the N-terminus, the 288-residue chain is G1/S-specific cyclin-D2 (288 aa).

A Cyclin N-terminal domain is found at 26-151 (VLQNLLTIEE…VVLGKLKWNL (126 aa)). The tract at residues 264–288 (DQDGSKSEDELDQASTPTDVRDIDL) is disordered. Ser270 is subject to Phosphoserine. Thr279 is modified (phosphothreonine).

The protein belongs to the cyclin family. Cyclin D subfamily. In terms of assembly, interacts with either CDK4 or CDK6 protein kinase to form a serine/threonine kinase holoenzyme complex. The cyclin subunit imparts substrate specificity to the complex. In terms of processing, phosphorylation at Thr-279 by MAP kinases is required for ubiquitination and degradation by the DCX(AMBRA1) complex. Post-translationally, ubiquitinated by the DCX(AMBRA1) complex during the transition from G1 to S cell phase, leading to its degradation: ubiquitination is dependent on Thr-279 phosphorylation. The DCX(AMBRA1) complex represents the major regulator of CCND2 stability during the G1/S transition. Polyubiquitinated by the SCF(FBXL2) complex, leading to proteasomal degradation.

It is found in the nucleus. It localises to the cytoplasm. Its subcellular location is the nucleus membrane. In terms of biological role, regulatory component of the cyclin D2-CDK4 (DC) complex that phosphorylates and inhibits members of the retinoblastoma (RB) protein family including RB1 and regulates the cell-cycle during G(1)/S transition. Phosphorylation of RB1 allows dissociation of the transcription factor E2F from the RB/E2F complex and the subsequent transcription of E2F target genes which are responsible for the progression through the G(1) phase. Hypophosphorylates RB1 in early G(1) phase. Cyclin D-CDK4 complexes are major integrators of various mitogenenic and antimitogenic signals. The chain is G1/S-specific cyclin-D2 (CCND2) from Sus scrofa (Pig).